The sequence spans 409 residues: Nitrogen permease regulator 2 homolog (409 aa).

It belongs to the NPR2 family.

The protein localises to the cytoplasm. It localises to the nucleus. In terms of biological role, mediates inactivation of the TORC1 complex in response to amino acid starvation. Post-transcriptional regulator of nitrogen permeases. This Schizosaccharomyces pombe (strain 972 / ATCC 24843) (Fission yeast) protein is Nitrogen permease regulator 2 homolog.